We begin with the raw amino-acid sequence, 596 residues long: Arginine--tRNA ligase (596 aa).

The 'HIGH' region motif lies at 123-133 (PNTNKPLHLGH).

Belongs to the class-I aminoacyl-tRNA synthetase family. As to quaternary structure, monomer.

It localises to the cytoplasm. It carries out the reaction tRNA(Arg) + L-arginine + ATP = L-arginyl-tRNA(Arg) + AMP + diphosphate. This Amoebophilus asiaticus (strain 5a2) protein is Arginine--tRNA ligase.